A 498-amino-acid chain; its full sequence is ATP synthase subunit alpha 1 (498 aa).

Belongs to the ATPase alpha/beta chains family. F-type ATPases have 2 components, CF(1) - the catalytic core - and CF(0) - the membrane proton channel. CF(1) has five subunits: alpha(3), beta(3), gamma(1), delta(1), epsilon(1). CF(0) has three main subunits: a(1), b(2) and c(9-12). The alpha and beta chains form an alternating ring which encloses part of the gamma chain. CF(1) is attached to CF(0) by a central stalk formed by the gamma and epsilon chains, while a peripheral stalk is formed by the delta and b chains.

It localises to the cell membrane. It catalyses the reaction ATP + H2O + 4 H(+)(in) = ADP + phosphate + 5 H(+)(out). In terms of biological role, produces ATP from ADP in the presence of a proton gradient across the membrane. The alpha chain is a regulatory subunit. The chain is ATP synthase subunit alpha 1 from Listeria monocytogenes serotype 4b (strain F2365).